A 615-amino-acid polypeptide reads, in one-letter code: Protein DlpA (615 aa).

Belongs to the isocitrate and isopropylmalate dehydrogenases family. It to M.jannaschii MJ0644 in the C-terminal section.

The sequence is that of Protein DlpA (dlpA) from Legionella pneumophila subsp. pneumophila (strain Philadelphia 1 / ATCC 33152 / DSM 7513).